A 367-amino-acid chain; its full sequence is Glutamate 5-kinase (367 aa).

Lys8 serves as a coordination point for ATP. Positions 49, 136, and 148 each coordinate substrate. ATP is bound by residues 168-169 and 210-216; these read TD and TGGMATK. Residues 275 to 353 enclose the PUA domain; that stretch reads TGKLLLDAGA…DQIVQILGYE (79 aa).

The protein belongs to the glutamate 5-kinase family.

The protein resides in the cytoplasm. It carries out the reaction L-glutamate + ATP = L-glutamyl 5-phosphate + ADP. The protein operates within amino-acid biosynthesis; L-proline biosynthesis; L-glutamate 5-semialdehyde from L-glutamate: step 1/2. In terms of biological role, catalyzes the transfer of a phosphate group to glutamate to form L-glutamate 5-phosphate. The chain is Glutamate 5-kinase from Synechococcus elongatus (strain ATCC 33912 / PCC 7942 / FACHB-805) (Anacystis nidulans R2).